Consider the following 462-residue polypeptide: UDP-N-acetylmuramoylalanine--D-glutamate ligase (462 aa).

112 to 118 (GTNGKTT) contacts ATP.

Belongs to the MurCDEF family.

The protein localises to the cytoplasm. The catalysed reaction is UDP-N-acetyl-alpha-D-muramoyl-L-alanine + D-glutamate + ATP = UDP-N-acetyl-alpha-D-muramoyl-L-alanyl-D-glutamate + ADP + phosphate + H(+). It participates in cell wall biogenesis; peptidoglycan biosynthesis. Its function is as follows. Cell wall formation. Catalyzes the addition of glutamate to the nucleotide precursor UDP-N-acetylmuramoyl-L-alanine (UMA). The protein is UDP-N-acetylmuramoylalanine--D-glutamate ligase of Nostoc sp. (strain PCC 7120 / SAG 25.82 / UTEX 2576).